A 339-amino-acid polypeptide reads, in one-letter code: Dihydroorotase (339 aa).

Zn(2+) is bound by residues His12 and His14. Residues 14–16 and Asn40 contribute to the substrate site; that span reads HVR. 4 residues coordinate Zn(2+): Lys94, His133, His167, and Asp239. At Lys94 the chain carries N6-carboxylysine. His133 contributes to the substrate binding site. Asp239 is a catalytic residue. His243 and Ala255 together coordinate substrate.

It belongs to the metallo-dependent hydrolases superfamily. DHOase family. Class II DHOase subfamily. As to quaternary structure, homodimer. The cofactor is Zn(2+).

It carries out the reaction (S)-dihydroorotate + H2O = N-carbamoyl-L-aspartate + H(+). It functions in the pathway pyrimidine metabolism; UMP biosynthesis via de novo pathway; (S)-dihydroorotate from bicarbonate: step 3/3. Catalyzes the reversible cyclization of carbamoyl aspartate to dihydroorotate. This is Dihydroorotase from Helicobacter pylori (strain HPAG1).